Consider the following 108-residue polypeptide: Nucleoid-associated protein PLES_37951 (108 aa).

2 disordered regions span residues 1–25 and 87–108; these read MMKG…KMQE and NQEK…KMPF. A compositionally biased stretch (polar residues) spans 87–98; that stretch reads NQEKMSGFTSGM.

It belongs to the YbaB/EbfC family. In terms of assembly, homodimer.

It is found in the cytoplasm. The protein resides in the nucleoid. Functionally, binds to DNA and alters its conformation. May be involved in regulation of gene expression, nucleoid organization and DNA protection. This chain is Nucleoid-associated protein PLES_37951, found in Pseudomonas aeruginosa (strain LESB58).